The following is a 488-amino-acid chain: Proline--tRNA ligase (488 aa).

It belongs to the class-II aminoacyl-tRNA synthetase family. ProS type 3 subfamily. In terms of assembly, homodimer.

It is found in the cytoplasm. It catalyses the reaction tRNA(Pro) + L-proline + ATP = L-prolyl-tRNA(Pro) + AMP + diphosphate. Catalyzes the attachment of proline to tRNA(Pro) in a two-step reaction: proline is first activated by ATP to form Pro-AMP and then transferred to the acceptor end of tRNA(Pro). In Pyrobaculum arsenaticum (strain DSM 13514 / JCM 11321 / PZ6), this protein is Proline--tRNA ligase.